Here is a 154-residue protein sequence, read N- to C-terminus: Large ribosomal subunit protein uL13 (154 aa).

It belongs to the universal ribosomal protein uL13 family. As to quaternary structure, part of the 50S ribosomal subunit.

Functionally, this protein is one of the early assembly proteins of the 50S ribosomal subunit, although it is not seen to bind rRNA by itself. It is important during the early stages of 50S assembly. In Rhodospirillum centenum (strain ATCC 51521 / SW), this protein is Large ribosomal subunit protein uL13.